A 263-amino-acid chain; its full sequence is 3-methyl-2-oxobutanoate hydroxymethyltransferase (263 aa).

Residues Asp43 and Asp82 each contribute to the Mg(2+) site. 3-methyl-2-oxobutanoate contacts are provided by residues 43–44 (DS), Asp82, and Lys111. Glu113 is a Mg(2+) binding site. Glu179 functions as the Proton acceptor in the catalytic mechanism.

It belongs to the PanB family. In terms of assembly, homodecamer; pentamer of dimers. Mg(2+) serves as cofactor.

The protein resides in the cytoplasm. It catalyses the reaction 3-methyl-2-oxobutanoate + (6R)-5,10-methylene-5,6,7,8-tetrahydrofolate + H2O = 2-dehydropantoate + (6S)-5,6,7,8-tetrahydrofolate. The protein operates within cofactor biosynthesis; (R)-pantothenate biosynthesis; (R)-pantoate from 3-methyl-2-oxobutanoate: step 1/2. Functionally, catalyzes the reversible reaction in which hydroxymethyl group from 5,10-methylenetetrahydrofolate is transferred onto alpha-ketoisovalerate to form ketopantoate. In Neisseria meningitidis serogroup B (strain ATCC BAA-335 / MC58), this protein is 3-methyl-2-oxobutanoate hydroxymethyltransferase.